The sequence spans 314 residues: Regulator of microtubule dynamics protein 1 (314 aa).

Lys-165 is subject to N6-succinyllysine. 2 TPR repeats span residues 168–204 (AICL…NPKD) and 222–258 (PWYQ…DPNF).

The protein belongs to the RMDN family. In terms of assembly, interacts with microtubules.

The protein localises to the cytoplasm. Its subcellular location is the cytoskeleton. It is found in the spindle. The protein resides in the spindle pole. The sequence is that of Regulator of microtubule dynamics protein 1 (RMDN1) from Pongo abelii (Sumatran orangutan).